Here is a 114-residue protein sequence, read N- to C-terminus: Ribosome-binding factor A (114 aa).

The protein belongs to the RbfA family. In terms of assembly, monomer. Binds 30S ribosomal subunits, but not 50S ribosomal subunits or 70S ribosomes.

Its subcellular location is the cytoplasm. One of several proteins that assist in the late maturation steps of the functional core of the 30S ribosomal subunit. Associates with free 30S ribosomal subunits (but not with 30S subunits that are part of 70S ribosomes or polysomes). Required for efficient processing of 16S rRNA. May interact with the 5'-terminal helix region of 16S rRNA. The chain is Ribosome-binding factor A from Listeria welshimeri serovar 6b (strain ATCC 35897 / DSM 20650 / CCUG 15529 / CIP 8149 / NCTC 11857 / SLCC 5334 / V8).